The sequence spans 240 residues: Regulatory protein RecX (240 aa).

This sequence belongs to the RecX family.

The protein localises to the cytoplasm. In terms of biological role, modulates RecA activity. This Lacticaseibacillus paracasei (strain ATCC 334 / BCRC 17002 / CCUG 31169 / CIP 107868 / KCTC 3260 / NRRL B-441) (Lactobacillus paracasei) protein is Regulatory protein RecX.